The chain runs to 212 residues: Translation initiation factor IF-3 (212 aa).

The segment at 171–212 (PKSASKKGHTPPKTQVEASKQANESAETEEEKKRCHPTKPVL) is disordered. The span at 182 to 195 (PKTQVEASKQANES) shows a compositional bias: polar residues.

Belongs to the IF-3 family. In terms of assembly, monomer.

The protein localises to the cytoplasm. Functionally, IF-3 binds to the 30S ribosomal subunit and shifts the equilibrium between 70S ribosomes and their 50S and 30S subunits in favor of the free subunits, thus enhancing the availability of 30S subunits on which protein synthesis initiation begins. This is Translation initiation factor IF-3 from Porphyromonas gingivalis (strain ATCC 33277 / DSM 20709 / CIP 103683 / JCM 12257 / NCTC 11834 / 2561).